Here is a 165-residue protein sequence, read N- to C-terminus: Nascent polypeptide-associated complex subunit alpha (165 aa).

The NAC-A/B domain occupies 14–78 (NRNEKKAREL…AKVDNFTQRL (65 aa)). Residues 126–165 (LSNDDIDLVVQQTNATKGQAIKALKEHNGDIVNAIMSLSK) form the UBA domain.

Belongs to the NAC-alpha family. As to quaternary structure, part of the nascent polypeptide-associated complex (NAC), consisting of EGD2 and EGD1. NAC associates with ribosomes via EGD1.

It localises to the cytoplasm. The protein localises to the nucleus. Component of the nascent polypeptide-associated complex (NAC), a dynamic component of the ribosomal exit tunnel, protecting the emerging polypeptides from interaction with other cytoplasmic proteins to ensure appropriate nascent protein targeting. The NAC complex also promotes mitochondrial protein import by enhancing productive ribosome interactions with the outer mitochondrial membrane and blocks the inappropriate interaction of ribosomes translating non-secretory nascent polypeptides with translocation sites in the membrane of the endoplasmic reticulum. EGD2 may also be involved in transcription regulation. The polypeptide is Nascent polypeptide-associated complex subunit alpha (EGD2) (Candida glabrata (strain ATCC 2001 / BCRC 20586 / JCM 3761 / NBRC 0622 / NRRL Y-65 / CBS 138) (Yeast)).